Reading from the N-terminus, the 665-residue chain is Transketolase (665 aa).

Residue His-26 participates in substrate binding. Residues His-66 and 114-116 each bind thiamine diphosphate; that span reads GPL. Asp-155 is a binding site for Mg(2+). Thiamine diphosphate is bound by residues Gly-156 and Asn-185. Residues Asn-185 and Ile-187 each coordinate Mg(2+). Substrate-binding residues include His-261, Arg-358, and Ser-385. Position 261 (His-261) interacts with thiamine diphosphate. The Proton donor role is filled by Glu-411. Position 437 (Phe-437) interacts with thiamine diphosphate. His-461, Asp-469, and Arg-520 together coordinate substrate.

It belongs to the transketolase family. Homodimer. It depends on Mg(2+) as a cofactor. Requires Ca(2+) as cofactor. The cofactor is Mn(2+). Co(2+) serves as cofactor. Thiamine diphosphate is required as a cofactor.

It carries out the reaction D-sedoheptulose 7-phosphate + D-glyceraldehyde 3-phosphate = aldehydo-D-ribose 5-phosphate + D-xylulose 5-phosphate. Its function is as follows. Catalyzes the transfer of a two-carbon ketol group from a ketose donor to an aldose acceptor, via a covalent intermediate with the cofactor thiamine pyrophosphate. This chain is Transketolase (tkt), found in Buchnera aphidicola subsp. Schizaphis graminum (strain Sg).